A 109-amino-acid polypeptide reads, in one-letter code: Cell division protein ZapA (109 aa).

Positions 22–99 form a coiled coil; the sequence is EQQDALNMAA…IEQALLEQGR (78 aa).

The protein belongs to the ZapA family. Type 1 subfamily. As to quaternary structure, homodimer. Interacts with FtsZ.

Its subcellular location is the cytoplasm. Functionally, activator of cell division through the inhibition of FtsZ GTPase activity, therefore promoting FtsZ assembly into bundles of protofilaments necessary for the formation of the division Z ring. It is recruited early at mid-cell but it is not essential for cell division. This is Cell division protein ZapA from Yersinia pseudotuberculosis serotype O:1b (strain IP 31758).